The sequence spans 203 residues: Signal peptidase I (203 aa).

The interval 1–26 (MSSESDSPTPQTPPAQPAASQPKADS) is disordered. Residues 1–33 (MSSESDSPTPQTPPAQPAASQPKADSPLMEGIK) are Cytoplasmic-facing. The segment covering 17–26 (PAASQPKADS) has biased composition (low complexity). The helical transmembrane segment at 34 to 50 (TIGLSVVLALGIRTFVA) threads the bilayer. Topologically, residues 51–203 (EARYIPSESM…LGELGPPPSY (153 aa)) are extracellular. Catalysis depends on residues Ser59 and Lys109.

This sequence belongs to the peptidase S26 family.

The protein localises to the cell membrane. The enzyme catalyses Cleavage of hydrophobic, N-terminal signal or leader sequences from secreted and periplasmic proteins.. The chain is Signal peptidase I (lepB) from Leptolyngbya laminosa (Phormidium laminosum).